Reading from the N-terminus, the 118-residue chain is Acidic phospholipase A2 (118 aa).

Ca(2+) is bound by residues Tyr-25, Gly-27, and Gly-29. The active site involves His-45. Asp-46 contributes to the Ca(2+) binding site. The active site involves Asp-86.

Belongs to the phospholipase A2 family. Group II subfamily. D49 sub-subfamily. The cofactor is Ca(2+). Six disulfide bonds are present. Expressed by the venom gland.

The protein localises to the secreted. It carries out the reaction a 1,2-diacyl-sn-glycero-3-phosphocholine + H2O = a 1-acyl-sn-glycero-3-phosphocholine + a fatty acid + H(+). Functionally, PLA2 catalyzes the calcium-dependent hydrolysis of the 2-acyl groups in 3-sn-phosphoglycerides. The protein is Acidic phospholipase A2 of Bitis gabonica (Gaboon adder).